A 260-amino-acid polypeptide reads, in one-letter code: Small ribosomal subunit protein eS4 (260 aa).

Residues 46 to 111 (VPLLILVRDM…RYRVVMNEHH (66 aa)) enclose the S4 RNA-binding domain.

Belongs to the eukaryotic ribosomal protein eS4 family.

This Methanopyrus kandleri (strain AV19 / DSM 6324 / JCM 9639 / NBRC 100938) protein is Small ribosomal subunit protein eS4.